The chain runs to 740 residues: Ribulose bisphosphate carboxylase, chloroplastic (740 aa).

A chloroplast-targeting transit peptide spans 1–55; that stretch reads MPSSSFTTGLALGAGALVGANAFVAPTAKTTNLRAPTQEASLQVAASQQTEQPAP. Residues 56 to 76 traverse the membrane as a helical segment; that stretch reads STSALPWAFGAGACLALAAGG. Residue asparagine 213 participates in substrate binding. The active-site Proton acceptor is lysine 268. Lysine 270 is a binding site for substrate. Residues lysine 293, aspartate 295, and glutamate 296 each contribute to the Mg(2+) site. Position 293 is an N6-carboxylysine (lysine 293). Histidine 389 functions as the Proton acceptor in the catalytic mechanism. Arginine 390, histidine 423, and serine 470 together coordinate substrate.

It belongs to the RuBisCO large chain family. Type II subfamily. In terms of assembly, homodimer. The cofactor is Mg(2+).

Its subcellular location is the plastid. The protein localises to the chloroplast membrane. It catalyses the reaction 2 (2R)-3-phosphoglycerate + 2 H(+) = D-ribulose 1,5-bisphosphate + CO2 + H2O. The catalysed reaction is D-ribulose 1,5-bisphosphate + O2 = 2-phosphoglycolate + (2R)-3-phosphoglycerate + 2 H(+). Functionally, ruBisCO catalyzes two reactions: the carboxylation of D-ribulose 1,5-bisphosphate, the primary event in carbon dioxide fixation, as well as the oxidative fragmentation of the pentose substrate. Both reactions occur simultaneously and in competition at the same active site. This Heterocapsa triquetra (Dinoflagellate) protein is Ribulose bisphosphate carboxylase, chloroplastic (rbcL).